A 556-amino-acid polypeptide reads, in one-letter code: Phosphoacetylglucosamine mutase (556 aa).

The Phosphoserine intermediate role is filled by serine 68. Serine 68, aspartate 286, aspartate 288, and aspartate 290 together coordinate Mg(2+). Position 68 is a phosphoserine (serine 68). Residues 386–388 (EAN), 518–522 (RPSGT), and arginine 527 each bind substrate.

This sequence belongs to the phosphohexose mutase family. Requires Mg(2+) as cofactor.

It carries out the reaction N-acetyl-alpha-D-glucosamine 1-phosphate = N-acetyl-D-glucosamine 6-phosphate. The protein operates within nucleotide-sugar biosynthesis; UDP-N-acetyl-alpha-D-glucosamine biosynthesis; N-acetyl-alpha-D-glucosamine 1-phosphate from alpha-D-glucosamine 6-phosphate (route I): step 2/2. In terms of biological role, interconverts GlcNAc-6-P and GlcNAc-1-P. This is Phosphoacetylglucosamine mutase (DRT101) from Arabidopsis thaliana (Mouse-ear cress).